The sequence spans 180 residues: Large ribosomal subunit protein uL5 (180 aa).

The protein belongs to the universal ribosomal protein uL5 family. In terms of assembly, part of the 50S ribosomal subunit; part of the 5S rRNA/L5/L18/L25 subcomplex. Contacts the 5S rRNA and the P site tRNA. Forms a bridge to the 30S subunit in the 70S ribosome.

In terms of biological role, this is one of the proteins that bind and probably mediate the attachment of the 5S RNA into the large ribosomal subunit, where it forms part of the central protuberance. In the 70S ribosome it contacts protein S13 of the 30S subunit (bridge B1b), connecting the 2 subunits; this bridge is implicated in subunit movement. Contacts the P site tRNA; the 5S rRNA and some of its associated proteins might help stabilize positioning of ribosome-bound tRNAs. The sequence is that of Large ribosomal subunit protein uL5 from Polynucleobacter necessarius subsp. necessarius (strain STIR1).